The primary structure comprises 182 residues: UPF0398 protein RBAM_020340 (182 aa).

The protein belongs to the UPF0398 family.

The sequence is that of UPF0398 protein RBAM_020340 from Bacillus velezensis (strain DSM 23117 / BGSC 10A6 / LMG 26770 / FZB42) (Bacillus amyloliquefaciens subsp. plantarum).